The primary structure comprises 272 residues: HMP-PP phosphatase (272 aa).

The active-site Nucleophile is Asp8. 3 residues coordinate Mg(2+): Asp8, Asp10, and Asp212.

It belongs to the HAD-like hydrolase superfamily. Cof family. Mg(2+) serves as cofactor.

It catalyses the reaction 4-amino-2-methyl-5-(diphosphooxymethyl)pyrimidine + H2O = 4-amino-2-methyl-5-(phosphooxymethyl)pyrimidine + phosphate + H(+). Functionally, catalyzes the hydrolysis of 4-amino-2-methyl-5-hydroxymethylpyrimidine pyrophosphate (HMP-PP) to 4-amino-2-methyl-5-hydroxymethylpyrimidine phosphate (HMP-P). The chain is HMP-PP phosphatase from Escherichia coli (strain UTI89 / UPEC).